Reading from the N-terminus, the 452-residue chain is BUB3-interacting and GLEBS motif-containing protein ZNF207 (452 aa).

The microtubule-binding region stretch occupies residues 1–92; that stretch reads MGRKKKKQLK…EGIPEKDMEE (92 aa). 2 C2H2-type zinc fingers span residues 11-34 and 35-58; these read PWCW…KAKH and FKCH…MQVH. 2 disordered regions span residues 99–131 and 298–330; these read QKTQ…SFQQ and STMS…TSAT. The span at 113 to 123 shows a compositional bias: acidic residues; the sequence is DDSDYDDDDDT. The tract at residues 329–361 is GLEBS; it reads ATSKLVHPDEDISLEEKRAQLPKYQRNLPRPGQ.

As to quaternary structure, interacts (via GLEBS region) with bub3.

It is found in the nucleus. The protein resides in the chromosome. The protein localises to the centromere. It localises to the kinetochore. Its subcellular location is the cytoplasm. It is found in the cytoskeleton. The protein resides in the spindle. Its function is as follows. Kinetochore- and microtubule-binding protein that plays a key role in spindle assembly. Znf207/BuGZ is mainly composed of disordered low-complexity regions and undergoes phase transition or coacervation to form temperature-dependent liquid droplets. Coacervation promotes microtubule bundling and concentrates tubulin, promoting microtubule polymerization and assembly of spindle and spindle matrix by concentrating its building blocks. The chain is BUB3-interacting and GLEBS motif-containing protein ZNF207 from Xenopus laevis (African clawed frog).